The primary structure comprises 451 residues: BAHD acyltransferase At3g29680 (451 aa).

Active-site proton acceptor residues include His161 and Asp393.

This sequence belongs to the plant acyltransferase family.

The chain is BAHD acyltransferase At3g29680 from Arabidopsis thaliana (Mouse-ear cress).